The sequence spans 809 residues: MPPSTSLLLLAALLPFALPASDWKTGEVTGKVVEKSEFPCYSLSRDNYTCSACIQYHESCAWCGAPMFDEKKPYARCDSRAKLMEHGCPNSYIEDPATKLDITEDSKLSDQGQVESEEEAVQIKPQEMYVEIRPKSRVRFNVTYRQAVDYPVDLYYLMDLSYSMKDDKQKLSELGDLLAERMRTVTKNFRLGFGSFIDKKLMPFIDPRIEKQLSPCPTPCAEPYGFKHQMSLTTNTAKFKAEVDKAEISGNLDAPEGGFDAVVQALACNKTIGWRERARKMIVFSTDAGFHFAGDGRLAGVVEPNDGTCHLDREGYYTETLNQDYPSIALLHQMIKDRKANVIFAVTKNNQDLYTQLSNALPDVSSSVGVLANDSRNIVDLIEKEYLKISEKIIMVDNANASEGLKLTYRSMCLDGTTLKDTNVCEGIRVGDEVQFEVTLENTHCIDKRDFVLRIGPSGLDETLIVNVKVLCDCDCERQDRIVTNSADCNGGDMVCGVCRCKGGNVGKYCECNRPGMSTAALNEKCKRTNESAICEGRGVCNCGRCECNPRANPEEQISGEFCECDNFNCPRHDRKICAEHGECNCGKCICAPGWTGRACECPISTDSCLSANGKICNGKGECICGRCRCFDSPDGNRYSGAKCEICPTCPTKCVEYKNCVMCQQWQTGPLNETACDQCEFKVIPVEELPNLNETTPCQFVDPADDCTFYYLYYYDEATDNATVWVRKHKDCPPPVPVLAIVLGVIAGIVILGILLLLLWKLLTVLHDRSEYATFNNERLMAKWDTNENPIYKQATTTFKNPVYAGKAN.

Residues 1 to 19 form the signal peptide; that stretch reads MPPSTSLLLLAALLPFALP. At 20–737 the chain is on the extracellular side; it reads ASDWKTGEVT…KHKDCPPPVP (718 aa). N-linked (GlcNAc...) asparagine glycosylation is found at N47, N141, N269, N373, and N400. Residues 153–352 form the VWFA domain; sequence DLYYLMDLSY…IFAVTKNNQD (200 aa). Cystine bridges form between C476–C496, C489–C499, C501–C510, C512–C543, C526–C541, C535–C546, C548–C563, C565–C586, C570–C584, C578–C589, C591–C600, C602–C625, C609–C623, C617–C628, and C630–C644. I-EGF domains lie at 476 to 511, 512 to 564, 565 to 601, and 602 to 645; these read CERQ…KYCE, CNRP…EFCE, CDNF…RACE, and CPIS…AKCE. N-linked (GlcNAc...) asparagine glycosylation is present at N530. 3 N-linked (GlcNAc...) asparagine glycosylation sites follow: N672, N693, and N721. Residues 738-758 form a helical membrane-spanning segment; sequence VLAIVLGVIAGIVILGILLLL. Residues 759-809 are Cytoplasmic-facing; the sequence is LWKLLTVLHDRSEYATFNNERLMAKWDTNENPIYKQATTTFKNPVYAGKAN. Y792 is subject to Phosphotyrosine.

The protein belongs to the integrin beta chain family. In terms of assembly, heterodimer of an alpha and a beta subunit. Interacts with alpha subunit ina-1. Interacts with alpha subunit pat-2. Component of an integrin containing attachment complex, composed of at least pat-2, pat-3, pat-4, pat-6, unc-52, unc-97 and unc-112. May interact with tns-1 (via C-terminus). Post-translationally, phosphorylated. Dephosphorylated by dep-1. Expressed in body wall muscles (at protein level). Expressed in gonadal sheath cells and spermatheca. Expressed in vulval cells and along the basal laminae that separate the vulval cells from the uterus (at the protein level).

Its subcellular location is the cell membrane. The protein localises to the lateral cell membrane. The protein resides in the basolateral cell membrane. It is found in the cytoplasm. It localises to the myofibril. Its subcellular location is the sarcomere. The protein localises to the m line. The protein resides in the cell junction. It is found in the focal adhesion. In terms of biological role, integrin alpha ina-1/beta pat-3 is a receptor for laminin. Integrin alpha pat-2/beta pat-3 recognizes the sequence R-G-D in its ligands. Plays a role in cell migration, morphogenesis and probably in cell-cell interactions. During gonad morphogenesis, involved in distal tip cell (DTC)-mediated guidance of gonad elongation, in maintaining their sharp tapering morphology and in their migration. Component of an integrin containing attachment complex, which is required for muscle development and maintenance. Involved in the assembly of dense bodies and M lines during body wall muscle embryonic development by recruiting one of their components, cpna-1, to integrin-mediated attachment sites. May play a similar role in the assembly of dense bodies in gonadal myoepithelial sheath cells. Probably by acting as a receptor for apoptotic cells, plays a role in the clearance of apoptotic cells during mid-embryogenesis. Required for ovulation. Dephosphorylated, probably within the alpha pat-2/beta pat-3 integrin receptor complex, by the phosphatase dep-1, which leads to down-stream effects including the negative regulation of let-23 signaling and vulval induction. When unphosphosphorylated, recruits the cytoplasmic adapter protein tln-1 to the plasma membrane of secondary vulval precursor cells. This promotes the linking of focal adhesion sites to the F-actin cytoskeleton, and it also acts to restrict the mobility of the let-23 receptor on the plasma membrane of vulval cells which thereby attenuates let-23 signaling. Plays a role in axon regeneration after injury. In Caenorhabditis elegans, this protein is Integrin beta pat-3.